The sequence spans 368 residues: Glutaminyl-peptide cyclotransferase (368 aa).

A signal peptide spans 1–23 (MAGERRDSKAAAFFCLAWALCLA). N-linked (GlcNAc...) asparagine glycosylation is present at N53. An intrachain disulfide couples C143 to C169. Position 164 (D164) interacts with Zn(2+). The active-site Proton acceptor is E207. E208 contributes to the Zn(2+) binding site. D254 acts as the Proton acceptor in catalysis. N292 carries N-linked (GlcNAc...) asparagine glycosylation. Residue H336 participates in Zn(2+) binding. Residue N352 is glycosylated (N-linked (GlcNAc...) asparagine).

It belongs to the glutaminyl-peptide cyclotransferase family. Expressed by the venom gland.

It is found in the secreted. It catalyses the reaction N-terminal L-glutaminyl-[peptide] = N-terminal 5-oxo-L-prolyl-[peptide] + NH4(+). Functionally, responsible for the biosynthesis of pyroglutamyl peptides. Has a bias against acidic and tryptophan residues adjacent to the N-terminal glutaminyl residue and a lack of importance of chain length after the second residue. Also catalyzes N-terminal pyroglutamate formation. The chain is Glutaminyl-peptide cyclotransferase (QPCT) from Boiga irregularis (Brown tree snake).